A 218-amino-acid polypeptide reads, in one-letter code: Flagellar calcium-binding protein TB-24 (218 aa).

Positions 1–27 (MGCSASKDTTNSKDGAASKGGKDGKTT) are disordered. 4 consecutive EF-hand domains span residues 48-83 (ESKS…ILKL), 84-119 (DEFT…LVEF), 130-165 (YDIF…LKEW), and 167-202 (VDIT…KKLQ). D61, N63, T65, K67, and E72 together coordinate Ca(2+). 8 residues coordinate Ca(2+): D143, D145, S147, E154, D180, N182, S184, and E191.

The protein belongs to the calflagin family.

Its subcellular location is the cell projection. The protein resides in the cilium. The protein localises to the flagellum. Functionally, may contribute to the rapid motility of the trypanosomes, playing a role either in flagellar structure or in calcium metabolism. Could alternate between a GDP-bound inactive form to a calcium/GTP-bound active form. The sequence is that of Flagellar calcium-binding protein TB-24 from Trypanosoma brucei brucei.